The primary structure comprises 491 residues: MRLYFRKLWLTNLFLGGALASSAAIGAVSPKTYKDADFYVAPTQQDVNYDLVDDFGANGNDTSDDSNALQRAINAISRKPNGGTLLIPNGTYHFLGIQMKSNVHIRVESDVIIKPTWNGDGKNHRLFEVGVNNIVRNFSFQGLGNGFLVDFKDSRDKNLAVFKLGDVRNYKISNFTIDDNKTIFASILVDVTERNGRLHWSRNGIIERIKQNNALFGYGLIQTYGADNILFRNLHSEGGIALRMETDNLLMKNYKQGGIRNIFADNIRCSKGLAAVMFGPHFMKNGDVQVTNVSSVSCGSAVRSDSGFVELFSPTDEVHTRQSWKQAVESKLGRGCAQTPYARGNGGTRWAARVTQKDACLDKAKLEYGIEPGSFGTVKVFDVTARFGYNADLKQDQLDYFSTSNPMCKRVCLPTKEQWSKQGQIYIGPSLAAVIDTTPETSKYDYDVKTFNVKRINFPVNSHKTIDTNTESSRVCNYYGMSECSSSRWER.

Positions 1 to 23 (MRLYFRKLWLTNLFLGGALASSA) are cleaved as a signal peptide. 4 cysteine pairs are disulfide-bonded: C269-C298, C336-C360, C408-C476, and C412-C484.

Belongs to the glycosyl hydrolase 82 family.

It is found in the secreted. It catalyses the reaction Endohydrolysis of 1,4-beta-D-linkages between D-galactose 4-sulfate and 3,6-anhydro-D-galactose-2-sulfate in iota-carrageenans.. Its function is as follows. Hydrolyzes iota-carrageenans, sulfated 1,3-alpha-1,4-beta galactans from red algal cell walls, with an inversion of anomeric configuration. Also active against hybrid iota-/nu-carrageenan, not active against kappa- or lambda-carrageenans. The chain is Iota-carrageenase from Alteromonas macleodii (Pseudoalteromonas macleodii).